Reading from the N-terminus, the 644-residue chain is Replication protein E1 (644 aa).

The Nuclear localization signal signature appears at 86-88 (KRK). Phosphoserine; by host is present on residues S92 and S96. A DNA-binding region region spans residues 180 to 346 (VPTSPTNQLL…LTIIQHGVDD (167 aa)). An SF3 helicase domain is found at 445 to 595 (VEFITFLCAL…LPFDKNRNPV (151 aa)). 471 to 478 (GPANTGKS) contacts ATP. K552 participates in a covalent cross-link: Glycyl lysine isopeptide (Lys-Gly) (interchain with G-Cter in SUMO).

It belongs to the papillomaviridae E1 protein family. Can form hexamers. Interacts with E2 protein; this interaction increases E1 DNA binding specificity. Interacts with host DNA polymerase subunit POLA2. Interacts with host single stranded DNA-binding protein RPA1. Interacts with host TOP1; this interaction stimulates the enzymatic activity of TOP1. In terms of processing, phosphorylated. Post-translationally, sumoylated.

The protein localises to the host nucleus. The enzyme catalyses Couples ATP hydrolysis with the unwinding of duplex DNA by translocating in the 3'-5' direction.. The catalysed reaction is ATP + H2O = ADP + phosphate + H(+). ATP-dependent DNA 3'-5' helicase required for initiation of viral DNA replication. It forms a complex with the viral E2 protein. The E1-E2 complex binds to the replication origin which contains binding sites for both proteins. During the initial step, a dimer of E1 interacts with a dimer of protein E2 leading to a complex that binds the viral origin of replication with high specificity. Then, a second dimer of E1 displaces the E2 dimer in an ATP-dependent manner to form the E1 tetramer. Following this, two E1 monomers are added to each half of the site, which results in the formation of two E1 trimers on the viral ori. Subsequently, two hexamers will be created. The double hexamer acts as a bi-directional helicase machinery and unwinds the viral DNA and then recruits the host DNA polymerase to start replication. This chain is Replication protein E1, found in Human papillomavirus 59.